The sequence spans 124 residues: Large ribosomal subunit protein bL19 (124 aa).

Belongs to the bacterial ribosomal protein bL19 family.

Its function is as follows. This protein is located at the 30S-50S ribosomal subunit interface and may play a role in the structure and function of the aminoacyl-tRNA binding site. The chain is Large ribosomal subunit protein bL19 from Orientia tsutsugamushi (strain Ikeda) (Rickettsia tsutsugamushi).